Here is a 1335-residue protein sequence, read N- to C-terminus: Probable serine/threonine-protein kinase ndrC (1335 aa).

Disordered stretches follow at residues 1 to 70, 85 to 158, 276 to 447, and 462 to 603; these read MSRK…KKGS, VDTH…LIPS, LPPP…SPLN, and TTTT…NNNK. Positions 8-17 are enriched in polar residues; the sequence is NRSSSSNSIE. Positions 27–41 are enriched in low complexity; the sequence is SNISNSSNINCNNSS. Positions 55-70 are enriched in basic residues; the sequence is RSKHSSPIHSLKKKGS. Over residues 89–117 the composition is skewed to low complexity; it reads SSSNSNNNSSSNNNNNNNNHNINSSSESS. A compositionally biased stretch (polar residues) spans 118-132; sequence TPTTPRSSFTPQVTM. Over residues 133 to 153 the composition is skewed to low complexity; it reads NSNQSSGNNSPQLSSRSSSQS. Positions 276–288 are enriched in pro residues; sequence LPPPSQQQLPPPQ. 6 stretches are compositionally biased toward low complexity: residues 289-331, 345-368, 382-396, 412-424, 437-447, and 462-484; these read SHQQ…TPQS, NQQQIQSSQSTTPTNSSQKSSPNK, SPSPSSPSSPSSPSS, PTPLIITPSSPSS, PSSFSGGSPLN, and TTTTTTTTTTSSSSSLSVTTTIS. A compositionally biased stretch (polar residues) spans 485-497; the sequence is NPNYTQNLPTTPL. Residues 498 to 507 show a composition bias toward low complexity; that stretch reads SNSSSNNNNN. Positions 508-528 are enriched in polar residues; sequence GSFITLQDTTNNKSIINNNRE. Positions 540 to 566 are enriched in low complexity; the sequence is SSGSSNTTSSTTNTTTPSSSSLTTSSG. Basic and acidic residues predominate over residues 567–581; it reads KESRDRDSKDKEKDL. Residues 586 to 602 are compositionally biased toward low complexity; sequence NNNNNNNNNNNNNNNNN. A coiled-coil region spans residues 586 to 613; it reads NNNNNNNNNNNNNNNNNKVEKEKENYCK. The 302-residue stretch at 718-1019 folds into the Protein kinase domain; sequence FKILTQIGKG…KQDFKNHPFF (302 aa). Residues 724–732 and Lys-747 contribute to the ATP site; that span reads IGKGGFGQV. Catalysis depends on Asp-840, which acts as the Proton acceptor. Residues 1020 to 1106 form the AGC-kinase C-terminal domain; the sequence is KNHNWDEIVN…RKSSALSLSM (87 aa). The segment covering 1239-1284 has biased composition (low complexity); it reads SQSQPSLANQLQSSSSSPSPSLQSQSQSPSLQSSSKSTPNLSSSLL. The tract at residues 1239-1313 is disordered; that stretch reads SQSQPSLANQ…IKKENESEEI (75 aa). The segment covering 1287 to 1313 has biased composition (basic and acidic residues); it reads PVKEELEYKNQTENEVEIKKENESEEI. The stretch at 1289 to 1325 forms a coiled coil; it reads KEELEYKNQTENEVEIKKENESEEIQSLRDQLKEIII.

It belongs to the protein kinase superfamily. AGC Ser/Thr protein kinase family.

It catalyses the reaction L-seryl-[protein] + ATP = O-phospho-L-seryl-[protein] + ADP + H(+). The enzyme catalyses L-threonyl-[protein] + ATP = O-phospho-L-threonyl-[protein] + ADP + H(+). The polypeptide is Probable serine/threonine-protein kinase ndrC (ndrC) (Dictyostelium discoideum (Social amoeba)).